A 99-amino-acid polypeptide reads, in one-letter code: Plastocyanin (99 aa).

Positions 1–99 constitute a Plastocyanin-like domain; the sequence is LDVLLGGDDG…AGMVGKVTVN (99 aa). Residues histidine 37, cysteine 84, histidine 87, and methionine 92 each coordinate Cu cation.

This sequence belongs to the plastocyanin family. The cofactor is Cu(2+).

Its subcellular location is the plastid. The protein localises to the chloroplast thylakoid membrane. Functionally, participates in electron transfer between P700 and the cytochrome b6-f complex in photosystem I. The chain is Plastocyanin (PETE) from Solanum tuberosum (Potato).